A 764-amino-acid chain; its full sequence is Thyrotropin receptor (764 aa).

The first 20 residues, 1–20 (MRPADLLQLVLLLDLPRDLG), serve as a signal peptide directing secretion. Residues 21–413 (GMGCSSPPCE…EFNPCEDIMG (393 aa)) lie on the Extracellular side of the membrane. A disulfide bond links cysteine 31 and cysteine 41. N-linked (GlcNAc...) asparagine glycosylation is found at asparagine 77, asparagine 99, and asparagine 113. LRR repeat units follow at residues 100 to 124 (LSKVTHIEIRNTRNLTYIDPDALKE), 125 to 150 (LPLLKFLGIFNTGLKMFPDLTKVYST), 152 to 174 (IFFILEITDNPYMTSIPVNAFQG), 176 to 199 (CNETLTLKLYNNGFTSVQGYAFNG), 200 to 223 (TKLDAVYLNKNKYLTVIDKDAFGG), 227 to 248 (GPSLLDVSQTSVTALPSKGLEH), and 250 to 271 (KELIARNTWTLKKLPLSLSFLH). Residues asparagine 177 and asparagine 198 are each glycosylated (N-linked (GlcNAc...) asparagine). Residue asparagine 302 is glycosylated (N-linked (GlcNAc...) asparagine). The residue at position 385 (tyrosine 385) is a Sulfotyrosine. Residues 414 to 441 (YKFLRIVVWFVSLLALLGNVFVLLILLT) form a helical membrane-spanning segment. At 442-450 (SHYKLNVPR) the chain is on the cytoplasmic side. The chain crosses the membrane as a helical span at residues 451–473 (FLMCNLAFADFCMGMYLLLIASV). Residues 474–494 (DLYTHSEYYNHAIDWQTGPGC) are Extracellular-facing. Cysteine 494 and cysteine 569 form a disulfide bridge. The chain crosses the membrane as a helical span at residues 495–517 (NTAGFFTVFASELSVYTLTVITL). Residues 518–537 (ERWYAITFAMRLDRKIRLRH) lie on the Cytoplasmic side of the membrane. Residues 538–560 (ACAIMVGGWVCCFLLALLPLVGI) form a helical membrane-spanning segment. Topologically, residues 561 to 580 (SSYAKVSICLPMDTETPLAL) are extracellular. A helical membrane pass occupies residues 581-602 (AYIVFVLTLNIVAFVIVCCCYV). At 603 to 625 (KIYITVRNPQYNPGDKDTKIAKR) the chain is on the cytoplasmic side. The chain crosses the membrane as a helical span at residues 626–649 (MAVLIFTDFICMAPISFYALSAIL). Residues 650-660 (NKPLITVSNSK) are Extracellular-facing. A helical transmembrane segment spans residues 661-682 (ILLVLFYPLNSCANPFLYAIFT). The Cytoplasmic segment spans residues 683 to 764 (KAFQRDVFIL…ISEEYMQTVL (82 aa)). The short motif at 762–764 (TVL) is the PDZ-binding element.

It belongs to the G-protein coupled receptor 1 family. FSH/LSH/TSH subfamily. In terms of assembly, interacts with heterodimer GPHA2:GPHB5; this interaction stimulates cAMP production. Interacts (via the PDZ-binding motif) with SCRIB; regulates TSHR trafficking and function. Post-translationally, glycosylated. Sulfated. Sulfation on Tyr-385 plays a role in thyrotropin receptor binding and activation. In terms of tissue distribution, expressed in thyroide cells (at protein level). Expressed in the thyroid.

It is found in the cell membrane. Its subcellular location is the basolateral cell membrane. Receptor for the thyroid-stimulating hormone (TSH) or thyrotropin. Also acts as a receptor for the heterodimeric glycoprotein hormone (GPHA2:GPHB5) or thyrostimulin. The activity of this receptor is mediated by G proteins which activate adenylate cyclase. Plays a central role in controlling thyroid cell metabolism. In Homo sapiens (Human), this protein is Thyrotropin receptor (TSHR).